The primary structure comprises 156 residues: Large ribosomal subunit protein eL24 (156 aa).

Positions 110 to 123 (RAAKEKQKQKELEK) are enriched in basic and acidic residues. The disordered stretch occupies residues 110–156 (RAAKEKQKQKELEKKAKKVEKKKPTLAPKQKAAKITQKPAPRVGGKR).

Belongs to the eukaryotic ribosomal protein eL24 family.

This chain is Large ribosomal subunit protein eL24 (RPL24), found in Schistosoma japonicum (Blood fluke).